The chain runs to 421 residues: Imidazolonepropionase (421 aa).

2 residues coordinate Fe(3+): His-81 and His-83. Residues His-81 and His-83 each coordinate Zn(2+). Residues Arg-90, Tyr-153, and His-186 each contribute to the 4-imidazolone-5-propanoate site. An N-formimidoyl-L-glutamate-binding site is contributed by Tyr-153. His-251 is a Fe(3+) binding site. His-251 serves as a coordination point for Zn(2+). Residue Glu-254 coordinates 4-imidazolone-5-propanoate. Asp-326 lines the Fe(3+) pocket. Asp-326 lines the Zn(2+) pocket. N-formimidoyl-L-glutamate contacts are provided by Asn-328 and Gly-330. Residue Ser-331 participates in 4-imidazolone-5-propanoate binding.

This sequence belongs to the metallo-dependent hydrolases superfamily. HutI family. Zn(2+) is required as a cofactor. The cofactor is Fe(3+).

It localises to the cytoplasm. It carries out the reaction 4-imidazolone-5-propanoate + H2O = N-formimidoyl-L-glutamate. The protein operates within amino-acid degradation; L-histidine degradation into L-glutamate; N-formimidoyl-L-glutamate from L-histidine: step 3/3. Its function is as follows. Catalyzes the hydrolytic cleavage of the carbon-nitrogen bond in imidazolone-5-propanoate to yield N-formimidoyl-L-glutamate. It is the third step in the universal histidine degradation pathway. The protein is Imidazolonepropionase of Streptococcus pyogenes serotype M18 (strain MGAS8232).